The chain runs to 503 residues: Ribose import ATP-binding protein RbsA (503 aa).

ABC transporter domains are found at residues Leu10 to Asp246 and Val256 to Glu500. Gly42–Ser49 contributes to the ATP binding site.

This sequence belongs to the ABC transporter superfamily. Ribose importer (TC 3.A.1.2.1) family. In terms of assembly, the complex is composed of an ATP-binding protein (RbsA), two transmembrane proteins (RbsC) and a solute-binding protein (RbsB).

It is found in the cell membrane. The catalysed reaction is D-ribose(out) + ATP + H2O = D-ribose(in) + ADP + phosphate + H(+). Its function is as follows. Part of the ABC transporter complex RbsABC involved in ribose import. Responsible for energy coupling to the transport system. The polypeptide is Ribose import ATP-binding protein RbsA (Rhodococcus jostii (strain RHA1)).